Here is a 342-residue protein sequence, read N- to C-terminus: ATP synthase subunit a (342 aa).

A run of 8 helical transmembrane segments spans residues 11-31 (GLIKVIALVVPFLLNVNAFAS), 109-129 (HVVTLWVVSAIVLIVFTIIGS), 170-190 (YLPYLLTVFMFVLLCNVLGLV), 199-219 (NINVTLTLATFTFVLTQIAAL), 238-258 (ALWIIMIPIEFIGLFTKPVAL), 262-282 (LFANMTAGHIVILSLIFISFI), 287-307 (IVAVAMSVPFSIFIYLLEIFV), and 308-328 (AFLQAYIFTMLSALFIGLASA).

This sequence belongs to the ATPase A chain family. In terms of assembly, F-type ATPases have 2 components, CF(1) - the catalytic core - and CF(0) - the membrane proton channel. CF(1) has five subunits: alpha(3), beta(3), gamma(1), delta(1), epsilon(1). CF(0) has four main subunits: a, b, b' and c.

Its subcellular location is the cell inner membrane. In terms of biological role, key component of the proton channel; it plays a direct role in the translocation of protons across the membrane. This Chlorobium phaeobacteroides (strain DSM 266 / SMG 266 / 2430) protein is ATP synthase subunit a.